The chain runs to 179 residues: Small ribosomal subunit protein uS5 (179 aa).

One can recognise an S5 DRBM domain in the interval 22–85; sequence MIEKLVAVNR…EYARKRMANV (64 aa).

Belongs to the universal ribosomal protein uS5 family. As to quaternary structure, part of the 30S ribosomal subunit. Contacts proteins S4 and S8.

With S4 and S12 plays an important role in translational accuracy. Functionally, located at the back of the 30S subunit body where it stabilizes the conformation of the head with respect to the body. In Xylella fastidiosa (strain M12), this protein is Small ribosomal subunit protein uS5.